A 180-amino-acid chain; its full sequence is UPF0149 protein XAC3406 (180 aa).

The protein belongs to the UPF0149 family.

The sequence is that of UPF0149 protein XAC3406 from Xanthomonas axonopodis pv. citri (strain 306).